The sequence spans 286 residues: MFNWIKTFMLMAAITALFIVIGGMIGGRSGMMLALLFALGMNFFSYWFSDKMVLRMYNAQEVSETTAPQFYRMVQELAGRAGLPMPRVYLIDEAQPNAFATGRNPEHAAVAATTGILNILSERELRGVMAHELAHVQHRDILISTLSATMAGAISALANFAVFFGGRDEEGRPVNPIAGIAVAILAPLAASLIQMAISRAREFEADRGGAVISGDPQALASALDKIHRFAAGIPFAAAEAHPATAQMMIMNPLHGGGLANLFSTHPATEERIARLMHMAQTGTYPA.

2 helical membrane passes run Thr-7–Gly-27 and Ser-29–Ser-49. A Zn(2+)-binding site is contributed by His-131. Glu-132 is an active-site residue. Zn(2+) is bound at residue His-135. 2 helical membrane-spanning segments follow: residues Leu-146 to Gly-166 and Ile-177 to Ile-197. Glu-202 is a Zn(2+) binding site.

Belongs to the peptidase M48B family. Zn(2+) serves as cofactor.

The protein localises to the cell inner membrane. This Ralstonia nicotianae (strain ATCC BAA-1114 / GMI1000) (Ralstonia solanacearum) protein is Protease HtpX homolog.